A 1770-amino-acid polypeptide reads, in one-letter code: Transposon Ty2-OR1 Gag-Pol polyprotein (1770 aa).

Polar residues-rich tracts occupy residues 1–39 and 49–60; these read MESQQLSQNSPTFHGSAYASVTSKEVPSNQDPLAVSASN and KVNSQQETTPGT. Disordered stretches follow at residues 1-88 and 359-449; these read MESQ…YQQH and QHSE…SNDE. The interval 295 to 397 is RNA-binding; that stretch reads ENNINVSDRL…SSKPRAAKAH (103 aa). A compositionally biased stretch (low complexity) spans 369–381; that stretch reads TSPNTTNTKVTTR. Polar residues-rich tracts occupy residues 399-408 and 415-435; these read IATSSKFSRV and ESTVSSQYLSDDNELSLGQQQ. The active-site For protease activity; shared with dimeric partner is the D457. The interval 579–636 is integrase-type zinc finger-like; the sequence is NVNKSKSVNKYPYPLIHRMLGHANFRSIQKSLKKNAVTYLKESDIEWSNASTYQCPDC. The Integrase catalytic domain maps to 656–831; that stretch reads ESYEPFQYLH…AGLDITTILP (176 aa). Mg(2+) is bound by residues D667 and D732. Composition is skewed to polar residues over residues 916-929, 1009-1024, and 1065-1082; these read FIEQNETEQSYDQN, ESDTTSPRHSSTFTAR, and QRNSDTNIKYRTTNSTPS. 3 disordered regions span residues 916 to 935, 1005 to 1038, and 1057 to 1205; these read FIEQNETEQSYDQNTESDHD, GGTIESDTTSPRHSSTFTARNQKRPGSPNDMIDL, and GGTE…TEIE. The short motif at 1193–1227 is the Bipartite nuclear localization signal element; it reads KKRSLEDNETEIEVSRDTWNNKNMRSLEPPRSKKR. The Reverse transcriptase Ty1/copia-type domain maps to 1353-1491; sequence NDYYITQLDI…DILGLEIKYQ (139 aa). D1361, D1442, D1443, D1625, E1667, and D1700 together coordinate Mg(2+). One can recognise an RNase H Ty1/copia-type domain in the interval 1625 to 1767; sequence DASYGNQPYY…IKTFKLLTNK (143 aa).

In terms of assembly, the capsid protein forms a homotrimer, from which the VLPs are assembled. The protease is a homodimer, whose active site consists of two apposed aspartic acid residues. In terms of processing, initially, virus-like particles (VLPs) are composed of the structural unprocessed proteins Gag and Gag-Pol, and also contain the host initiator methionine tRNA (tRNA(i)-Met) which serves as a primer for minus-strand DNA synthesis, and a dimer of genomic Ty RNA. Processing of the polyproteins occurs within the particle and proceeds by an ordered pathway, called maturation. First, the protease (PR) is released by autocatalytic cleavage of the Gag-Pol polyprotein, and this cleavage is a prerequisite for subsequent processing at the remaining sites to release the mature structural and catalytic proteins. Maturation takes place prior to the RT reaction and is required to produce transposition-competent VLPs.

It localises to the cytoplasm. Its subcellular location is the nucleus. The enzyme catalyses DNA(n) + a 2'-deoxyribonucleoside 5'-triphosphate = DNA(n+1) + diphosphate. The catalysed reaction is Endonucleolytic cleavage to 5'-phosphomonoester.. In terms of biological role, capsid protein (CA) is the structural component of the virus-like particle (VLP), forming the shell that encapsulates the retrotransposons dimeric RNA genome. The particles are assembled from trimer-clustered units and there are holes in the capsid shells that allow for the diffusion of macromolecules. CA also has nucleocapsid-like chaperone activity, promoting primer tRNA(i)-Met annealing to the multipartite primer-binding site (PBS), dimerization of Ty2 RNA and initiation of reverse transcription. Its function is as follows. The aspartyl protease (PR) mediates the proteolytic cleavages of the Gag and Gag-Pol polyproteins after assembly of the VLP. Reverse transcriptase/ribonuclease H (RT) is a multifunctional enzyme that catalyzes the conversion of the retro-elements RNA genome into dsDNA within the VLP. The enzyme displays a DNA polymerase activity that can copy either DNA or RNA templates, and a ribonuclease H (RNase H) activity that cleaves the RNA strand of RNA-DNA heteroduplexes during plus-strand synthesis and hydrolyzes RNA primers. The conversion leads to a linear dsDNA copy of the retrotransposon that includes long terminal repeats (LTRs) at both ends. Functionally, integrase (IN) targets the VLP to the nucleus, where a subparticle preintegration complex (PIC) containing at least integrase and the newly synthesized dsDNA copy of the retrotransposon must transit the nuclear membrane. Once in the nucleus, integrase performs the integration of the dsDNA into the host genome. This chain is Transposon Ty2-OR1 Gag-Pol polyprotein (TY2B-OR1), found in Saccharomyces cerevisiae (strain ATCC 204508 / S288c) (Baker's yeast).